Consider the following 96-residue polypeptide: Large ribosomal subunit protein uL23 (96 aa).

It belongs to the universal ribosomal protein uL23 family. As to quaternary structure, part of the 50S ribosomal subunit. Contacts protein L29, and trigger factor when it is bound to the ribosome.

One of the early assembly proteins it binds 23S rRNA. One of the proteins that surrounds the polypeptide exit tunnel on the outside of the ribosome. Forms the main docking site for trigger factor binding to the ribosome. The protein is Large ribosomal subunit protein uL23 of Alkaliphilus metalliredigens (strain QYMF).